The primary structure comprises 314 residues: Nucleotide-binding protein CE1710 (314 aa).

A disordered region spans residues 1-29; sequence MNQTPGSTVPETATPVTSPASSPSAPETT. Positions 7 to 29 are enriched in low complexity; that stretch reads STVPETATPVTSPASSPSAPETT. Position 37-44 (37-44) interacts with ATP; that stretch reads GMSGAGLS. 88-91 provides a ligand contact to GTP; it reads DVRS.

This sequence belongs to the RapZ-like family.

Displays ATPase and GTPase activities. In Corynebacterium efficiens (strain DSM 44549 / YS-314 / AJ 12310 / JCM 11189 / NBRC 100395), this protein is Nucleotide-binding protein CE1710.